The primary structure comprises 721 residues: Polyribonucleotide nucleotidyltransferase (721 aa).

D495 and D501 together coordinate Mg(2+). Residues 562 to 621 (PRLLSFRIDPELIGTVIGPGGRTIKGITERTNTKIDIEDSGIVTIASHDGAAADEAQKII) form the KH domain. An S1 motif domain is found at 631-699 (GEVFSGAITR…NRGRINLTLR (69 aa)). The disordered stretch occupies residues 700 to 721 (GVPQNGEEAEPAPAPTPVAPLN). The segment covering 711-721 (APAPTPVAPLN) has biased composition (pro residues).

It belongs to the polyribonucleotide nucleotidyltransferase family. Mg(2+) serves as cofactor.

It is found in the cytoplasm. It carries out the reaction RNA(n+1) + phosphate = RNA(n) + a ribonucleoside 5'-diphosphate. Involved in mRNA degradation. Catalyzes the phosphorolysis of single-stranded polyribonucleotides processively in the 3'- to 5'-direction. The protein is Polyribonucleotide nucleotidyltransferase of Synechococcus sp. (strain WH7803).